Consider the following 602-residue polypeptide: Sodium- and chloride-dependent GABA transporter 2 (602 aa).

At 1 to 40 the chain is on the cytoplasmic side; sequence MDNRVSGTTSNGETKPVCPVMEKVEEDGTLEREQWTNKME. 3 consecutive transmembrane segments (helical) span residues 41–61, 68–88, and 121–141; these read FVLS…FPYL, GAFF…VFFL, and IVSL…FYLF. Over 142–206 the chain is Extracellular; it reads SSFTTDLPWG…GIQHLGSLRW (65 aa). The cysteines at positions 153 and 162 are disulfide-linked. N-linked (GlcNAc...) asparagine glycans are attached at residues N169, N173, and N178. A run of 2 helical transmembrane segments spans residues 207 to 227 and 233 to 253; these read ELVL…WKGV and VVYF…IRGV. N-linked (GlcNAc...) asparagine glycosylation occurs at N269. The next 7 helical transmembrane spans lie at 282 to 302, 319 to 339, 366 to 386, 418 to 438, 453 to 473, 490 to 510, and 528 to 548; these read AGTQ…ALGS, ILNS…LGFM, VVML…VVLL, ILIL…LTEG, GMCL…VYGA, PLIK…TFLF, and WWGD…IPAW. The Cytoplasmic segment spans residues 549–602; the sequence is SIYKLRTLKGPLRERLRQLVCPAEDLPQKSQPELTSPATPMTSLLRLTELESNC. T587 carries the post-translational modification Phosphothreonine. Position 591 is a phosphoserine (S591).

Belongs to the sodium:neurotransmitter symporter (SNF) (TC 2.A.22) family. SLC6A13 subfamily. As to expression, brain, retina, and peripheral tissues. Expressed in hepatocytes (at protein level).

The protein localises to the cell membrane. The protein resides in the basolateral cell membrane. It catalyses the reaction 4-aminobutanoate(out) + chloride(out) + 2 Na(+)(out) = 4-aminobutanoate(in) + chloride(in) + 2 Na(+)(in). The catalysed reaction is taurine(out) + chloride(out) + 2 Na(+)(out) = taurine(in) + chloride(in) + 2 Na(+)(in). It carries out the reaction beta-alanine(out) + chloride(out) + 2 Na(+)(out) = beta-alanine(in) + chloride(in) + 2 Na(+)(in). The enzyme catalyses hypotaurine(out) + chloride(out) + 2 Na(+)(out) = hypotaurine(in) + chloride(in) + 2 Na(+)(in). With respect to regulation, GABA transport is inhibited by beta-alanine, L-2,4-Diaminobutyric acid, hypotaurine and nipecotic acid. Taurine transport is inhibited by hypotaurine, beta-alanine and nipecotic acid. Functionally, mediates sodium- and chloride-dependent transport of gamma-aminobutyric acid (GABA). Mediates transport of taurine and is the major taurine transporter in hepatocytes. Can also mediate transport of beta-alanine and hypotaurine. The protein is Sodium- and chloride-dependent GABA transporter 2 (Slc6a13) of Rattus norvegicus (Rat).